Here is a 225-residue protein sequence, read N- to C-terminus: UPF0173 metal-dependent hydrolase PF1764 (225 aa).

The protein belongs to the UPF0173 family.

The chain is UPF0173 metal-dependent hydrolase PF1764 from Pyrococcus furiosus (strain ATCC 43587 / DSM 3638 / JCM 8422 / Vc1).